Here is a 173-residue protein sequence, read N- to C-terminus: Protein tyrosine phosphatase type IVA 3 (173 aa).

Residues A8 to K161 enclose the Tyrosine-protein phosphatase domain. A disulfide bond links C49 and C104. The active-site Proton donor is D72. The Phosphocysteine intermediate role is filled by C104. Residue R110 participates in substrate binding. C170 bears the Cysteine methyl ester mark. A lipid anchor (S-farnesyl cysteine) is attached at C170. Positions C171–M173 are cleaved as a propeptide — removed in mature form.

The protein belongs to the protein-tyrosine phosphatase family. In terms of assembly, interacts with tubulin. In terms of processing, farnesylated. Farnesylation is required for membrane targeting. As to expression, mainly expressed in cardiomyocytes and skeletal muscle; also found in pancreas. Consistently overexpressed in colon cancer metastasis.

It localises to the cell membrane. Its subcellular location is the early endosome. The enzyme catalyses O-phospho-L-tyrosyl-[protein] + H2O = L-tyrosyl-[protein] + phosphate. Inhibited by sodium orthovanadate and peroxovanadium compounds, and by pentamidine. In terms of biological role, protein tyrosine phosphatase which stimulates progression from G1 into S phase during mitosis. Enhances cell proliferation, cell motility and invasive activity, and promotes cancer metastasis. May be involved in the progression of cardiac hypertrophy by inhibiting intracellular calcium mobilization in response to angiotensin II. The protein is Protein tyrosine phosphatase type IVA 3 (PTP4A3) of Homo sapiens (Human).